The chain runs to 104 residues: Large ribosomal subunit protein uL24 (104 aa).

Belongs to the universal ribosomal protein uL24 family. As to quaternary structure, part of the 50S ribosomal subunit.

One of two assembly initiator proteins, it binds directly to the 5'-end of the 23S rRNA, where it nucleates assembly of the 50S subunit. Functionally, one of the proteins that surrounds the polypeptide exit tunnel on the outside of the subunit. In Shewanella woodyi (strain ATCC 51908 / MS32), this protein is Large ribosomal subunit protein uL24.